Consider the following 340-residue polypeptide: Phosphoribosylformylglycinamidine cyclo-ligase (340 aa).

Belongs to the AIR synthase family.

The protein localises to the cytoplasm. The catalysed reaction is 2-formamido-N(1)-(5-O-phospho-beta-D-ribosyl)acetamidine + ATP = 5-amino-1-(5-phospho-beta-D-ribosyl)imidazole + ADP + phosphate + H(+). It functions in the pathway purine metabolism; IMP biosynthesis via de novo pathway; 5-amino-1-(5-phospho-D-ribosyl)imidazole from N(2)-formyl-N(1)-(5-phospho-D-ribosyl)glycinamide: step 2/2. This Streptococcus pyogenes serotype M3 (strain ATCC BAA-595 / MGAS315) protein is Phosphoribosylformylglycinamidine cyclo-ligase.